We begin with the raw amino-acid sequence, 198 residues long: Ribonuclease HII (198 aa).

An RNase H type-2 domain is found at 3 to 194 (RRVCGVDEAG…VKRCLALGQQ (192 aa)). Residues aspartate 9, glutamate 10, and aspartate 101 each coordinate a divalent metal cation.

It belongs to the RNase HII family. Mn(2+) is required as a cofactor. The cofactor is Mg(2+).

The protein localises to the cytoplasm. It carries out the reaction Endonucleolytic cleavage to 5'-phosphomonoester.. Its function is as follows. Endonuclease that specifically degrades the RNA of RNA-DNA hybrids. The sequence is that of Ribonuclease HII from Laribacter hongkongensis (strain HLHK9).